A 460-amino-acid polypeptide reads, in one-letter code: Cysteine--tRNA ligase (460 aa).

Cys-28 lines the Zn(2+) pocket. The 'HIGH' region motif lies at 30-40; the sequence is MTVYDYCHLGH. The Zn(2+) site is built by Cys-209, His-234, and Glu-238. The 'KMSKS' region signature appears at 266-270; that stretch reads KMSKS. Lys-269 provides a ligand contact to ATP.

Belongs to the class-I aminoacyl-tRNA synthetase family. Monomer. Zn(2+) is required as a cofactor.

It localises to the cytoplasm. It carries out the reaction tRNA(Cys) + L-cysteine + ATP = L-cysteinyl-tRNA(Cys) + AMP + diphosphate. This chain is Cysteine--tRNA ligase, found in Pseudomonas syringae pv. tomato (strain ATCC BAA-871 / DC3000).